Here is a 139-residue protein sequence, read N- to C-terminus: Putative pre-16S rRNA nuclease (139 aa).

This sequence belongs to the YqgF nuclease family.

The protein resides in the cytoplasm. In terms of biological role, could be a nuclease involved in processing of the 5'-end of pre-16S rRNA. This is Putative pre-16S rRNA nuclease from Streptococcus suis (strain 98HAH33).